Consider the following 141-residue polypeptide: Nucleoside diphosphate kinase (141 aa).

The ATP site is built by Lys11, Phe59, Arg87, Thr93, Arg104, and Asn114. The Pros-phosphohistidine intermediate role is filled by His117.

Belongs to the NDK family. As to quaternary structure, homotetramer. It depends on Mg(2+) as a cofactor.

Its subcellular location is the cytoplasm. The catalysed reaction is a 2'-deoxyribonucleoside 5'-diphosphate + ATP = a 2'-deoxyribonucleoside 5'-triphosphate + ADP. It catalyses the reaction a ribonucleoside 5'-diphosphate + ATP = a ribonucleoside 5'-triphosphate + ADP. Major role in the synthesis of nucleoside triphosphates other than ATP. The ATP gamma phosphate is transferred to the NDP beta phosphate via a ping-pong mechanism, using a phosphorylated active-site intermediate. This Legionella pneumophila subsp. pneumophila (strain Philadelphia 1 / ATCC 33152 / DSM 7513) protein is Nucleoside diphosphate kinase.